The sequence spans 217 residues: Ependymin (217 aa).

The first 20 residues, 1–20 (MHTVKLLCVVFSCLCAIGWA), serve as a signal peptide directing secretion. 2 N-linked (GlcNAc...) asparagine glycosylation sites follow: N73 and N96.

The protein belongs to the ependymin family. In terms of assembly, forms disulfide-linked dimers. In terms of processing, binds calcium through the terminal sialic acids. In terms of tissue distribution, EPDs are synthesized in the meninx and secreted in the cerebrospinal fluid.

The protein resides in the secreted. In terms of biological role, may play a role in neural plasticity. May be involved during axon regeneration. The polypeptide is Ependymin (epd) (Danio rerio (Zebrafish)).